The chain runs to 368 residues: Isocitrate dehydrogenase [NAD] subunit 2, mitochondrial (368 aa).

The transit peptide at 1–14 (MFRQSIVKQSCRFL) directs the protein to the mitochondrion. Residues Arg118, Arg128, Arg149, and Asp236 each contribute to the substrate site. Residues Asp236, Asp262, and Asp266 each contribute to the Mg(2+) site.

This sequence belongs to the isocitrate and isopropylmalate dehydrogenases family. In terms of assembly, octamer of two non-identical subunits IDH1 and IDH2. Mg(2+) is required as a cofactor. Mn(2+) serves as cofactor.

Its subcellular location is the mitochondrion. The enzyme catalyses D-threo-isocitrate + NAD(+) = 2-oxoglutarate + CO2 + NADH. Functionally, performs an essential role in the oxidative function of the citric acid cycle. This Kluyveromyces lactis (strain ATCC 8585 / CBS 2359 / DSM 70799 / NBRC 1267 / NRRL Y-1140 / WM37) (Yeast) protein is Isocitrate dehydrogenase [NAD] subunit 2, mitochondrial (IDH2).